Here is a 90-residue protein sequence, read N- to C-terminus: Putative sodium channel toxin Ts28 (90 aa).

The N-terminal stretch at 1–23 (MKISLVTWLITALCLMEIEEIDG) is a signal peptide. Positions 26 to 86 (PGNYPVDFQG…FWDVMKKQCD (61 aa)) constitute an LCN-type CS-alpha/beta domain. 3 cysteine pairs are disulfide-bonded: Cys-40–Cys-60, Cys-46–Cys-65, and Cys-50–Cys-67.

This sequence belongs to the long (3 C-C) scorpion toxin superfamily. As to quaternary structure, monomer (edited version) and heterodimer (non-edited version) of this alpha chain and a beta chain (AC P0CI43). Expressed by the venom gland.

The protein resides in the secreted. In terms of biological role, the edited BmKBTx-like may modulate voltage-gated sodium channels (Nav). The non-edited form is able to form a heterodimer. In orthologs, a heterodimer with LVP beta-chain induces lipolysis in rat adipocytes, which is mediated through the beta-2 adrenergic receptor pathway (ADRB2). Since no LVP beta-chains have been identified in the venom of this scorpion, it is possible that this protein is not involved in a lipolysis process. The polypeptide is Putative sodium channel toxin Ts28 (Tityus serrulatus (Brazilian scorpion)).